The primary structure comprises 224 residues: Vesicle transport through interaction with t-SNAREs homolog 1A (224 aa).

Residues 1–199 lie on the Cytoplasmic side of the membrane; it reads MSADFEGYEQ…GMLRRIIQNR (199 aa). Coiled-coil stretches lie at residues 31-92 and 106-185; these read PDEK…KRSR and DAGN…GKSS. A helical; Anchor for type IV membrane protein membrane pass occupies residues 200–220; sequence ILLVILGIIVVITILTAITFF. Topologically, residues 221–224 are vesicular; sequence VRGH.

It belongs to the VTI1 family. As to quaternary structure, interacts with distinct SNARE complexes that contain either STX5 or STX6. Interacts with NAPA and, to a lesser extent, with NAPG. Identified in a complex containing STX6, STX12, VAMP4 and VTI1A. Specifically expressed in the neuronal tissues cerebellum, cortex and hippocampus. Isoform 1/VTI1A is expressed in the same neuronal tissues but also in lung, liver, kidney and spleen.

Its subcellular location is the membrane. It is found in the cytoplasmic vesicle. It localises to the secretory vesicle. The protein localises to the synaptic vesicle membrane. The protein resides in the clathrin-coated vesicle membrane. Its subcellular location is the golgi apparatus membrane. Its function is as follows. V-SNARE that mediates vesicle transport pathways through interactions with t-SNAREs on the target membrane. These interactions are proposed to mediate aspects of the specificity of vesicle trafficking and to promote fusion of the lipid bilayers. Involved in vesicular transport from the late endosomes to the trans-Golgi network. Along with VAMP7, involved in an non-conventional RAB1-dependent traffic route to the cell surface used by KCNIP1 and KCND2. May be concerned with increased secretion of cytokines associated with cellular senescence. In Rattus norvegicus (Rat), this protein is Vesicle transport through interaction with t-SNAREs homolog 1A (Vti1a).